We begin with the raw amino-acid sequence, 120 residues long: Large ribosomal subunit protein bL12 (120 aa).

It belongs to the bacterial ribosomal protein bL12 family. In terms of assembly, homodimer. Part of the ribosomal stalk of the 50S ribosomal subunit. Forms a multimeric L10(L12)X complex, where L10 forms an elongated spine to which 2 to 4 L12 dimers bind in a sequential fashion. Binds GTP-bound translation factors.

Its function is as follows. Forms part of the ribosomal stalk which helps the ribosome interact with GTP-bound translation factors. Is thus essential for accurate translation. This chain is Large ribosomal subunit protein bL12, found in Lactobacillus helveticus (strain DPC 4571).